Reading from the N-terminus, the 405-residue chain is Probable tRNA sulfurtransferase (405 aa).

The 106-residue stretch at 60-165 (QEVSASLKKI…PDAAYISHEE (106 aa)) folds into the THUMP domain. Residues 183–184 (ML), 208–209 (HF), Arg-265, Gly-287, and Gln-296 contribute to the ATP site.

Belongs to the ThiI family.

Its subcellular location is the cytoplasm. The catalysed reaction is [ThiI sulfur-carrier protein]-S-sulfanyl-L-cysteine + a uridine in tRNA + 2 reduced [2Fe-2S]-[ferredoxin] + ATP + H(+) = [ThiI sulfur-carrier protein]-L-cysteine + a 4-thiouridine in tRNA + 2 oxidized [2Fe-2S]-[ferredoxin] + AMP + diphosphate. It catalyses the reaction [ThiS sulfur-carrier protein]-C-terminal Gly-Gly-AMP + S-sulfanyl-L-cysteinyl-[cysteine desulfurase] + AH2 = [ThiS sulfur-carrier protein]-C-terminal-Gly-aminoethanethioate + L-cysteinyl-[cysteine desulfurase] + A + AMP + 2 H(+). The protein operates within cofactor biosynthesis; thiamine diphosphate biosynthesis. Its function is as follows. Catalyzes the ATP-dependent transfer of a sulfur to tRNA to produce 4-thiouridine in position 8 of tRNAs, which functions as a near-UV photosensor. Also catalyzes the transfer of sulfur to the sulfur carrier protein ThiS, forming ThiS-thiocarboxylate. This is a step in the synthesis of thiazole, in the thiamine biosynthesis pathway. The sulfur is donated as persulfide by IscS. The chain is Probable tRNA sulfurtransferase from Streptococcus suis (strain 98HAH33).